A 390-amino-acid polypeptide reads, in one-letter code: 1-acyl-sn-glycerol-3-phosphate acyltransferase 2 (390 aa).

The chain crosses the membrane as a helical span at residues 2-22 (AMAAAVIVPLGILFFISGLVV). Positions 91-96 (HRSDID) match the HXXXXD motif motif. Helical transmembrane passes span 305 to 325 (LAVV…FLHW) and 333 to 353 (KGIA…QILI). Positions 358–390 (SERSTPAKVAPAKPKDNHQSGPSSQTEVEEKQK) are disordered.

The protein belongs to the 1-acyl-sn-glycerol-3-phosphate acyltransferase family.

It localises to the endoplasmic reticulum membrane. The catalysed reaction is a 1-acyl-sn-glycero-3-phosphate + an acyl-CoA = a 1,2-diacyl-sn-glycero-3-phosphate + CoA. It functions in the pathway phospholipid metabolism; CDP-diacylglycerol biosynthesis; CDP-diacylglycerol from sn-glycerol 3-phosphate: step 2/3. In terms of biological role, converts lysophosphatidic acid (LPA) into phosphatidic acid by incorporating acyl moiety at the 2 position. In Brassica napus (Rape), this protein is 1-acyl-sn-glycerol-3-phosphate acyltransferase 2 (LPAT2).